A 256-amino-acid polypeptide reads, in one-letter code: Probable transcriptional regulatory protein cce_0894 (256 aa).

The protein belongs to the TACO1 family.

The protein localises to the cytoplasm. This chain is Probable transcriptional regulatory protein cce_0894, found in Crocosphaera subtropica (strain ATCC 51142 / BH68) (Cyanothece sp. (strain ATCC 51142)).